Reading from the N-terminus, the 248-residue chain is MKIQCDVCEKAPATVICCADEAALCPQCDIEIHAANKLASKHQRLHLNSLSTKFPRCDICQEKAAFIFCVEDRALLCRDCDESIHVANSRSANHQRFLATGIKVALTSTICSKEIEKNQPEPSNNQQKANQIPAKSTSQQQQQPSSATPLPWAVDDFFHFSDIESTDKKGQLDLGAGELDWFSDMGFFGDQINDKALPAAEVPELSVSHLGHVHSYKPMKSNVSHKKPRFETRYDDDDEEHFIVPDLG.

The Zn(2+) site is built by Cys-5, Cys-8, Cys-28, His-33, Cys-57, Cys-60, Cys-80, and His-85. The B box-type 1; atypical zinc finger occupies 5–47; that stretch reads CDVCEKAPATVICCADEAALCPQCDIEIHAANKLASKHQRLHL. A B box-type 2; atypical zinc finger spans residues 57–99; that stretch reads CDICQEKAAFIFCVEDRALLCRDCDESIHVANSRSANHQRFLA. The disordered stretch occupies residues 115–148; sequence IEKNQPEPSNNQQKANQIPAKSTSQQQQQPSSAT. Polar residues predominate over residues 120–130; it reads PEPSNNQQKAN. Residues 131–148 are compositionally biased toward low complexity; that stretch reads QIPAKSTSQQQQQPSSAT. Positions 226 to 229 match the Nuclear localization signal motif; it reads KKPR. Positions 236-248 are interaction with COP1; sequence DDDEEHFIVPDLG.

Interacts with COP1 WD40 domain. Interacts with HY5 and HYH. Interacts with RCD1 and TRP4. COP1-mediated ubiquitination and subsequent proteasomal degradation of BBX24/STO occurs in the dark. In terms of tissue distribution, high expression in leaves and lower in roots and flowers.

It localises to the nucleus. Functionally, acts as a negative regulator of seedling photomorphogenesis and light-regulated inhibition of hypocotyl elongation. BBX24/STO and BBX25/STH function as transcriptional corepressors of HY5 activity, leading to the down-regulation of BBX22 expression. BBX24/STO acts additively with BBX25/STH during de-etiolation and the hypocotyl shade avoidance response. Functions as a negative regulator of photomorphogenic UV-B responses by interacting with both COP1 and HY5. May act as a transcription factor in the salt-stress response. This Arabidopsis thaliana (Mouse-ear cress) protein is B-box zinc finger protein 24.